The primary structure comprises 115 residues: Large ribosomal subunit protein uL18 (115 aa).

This sequence belongs to the universal ribosomal protein uL18 family. As to quaternary structure, part of the 50S ribosomal subunit; part of the 5S rRNA/L5/L18/L25 subcomplex. Contacts the 5S and 23S rRNAs.

This is one of the proteins that bind and probably mediate the attachment of the 5S RNA into the large ribosomal subunit, where it forms part of the central protuberance. The chain is Large ribosomal subunit protein uL18 from Vesicomyosocius okutanii subsp. Calyptogena okutanii (strain HA).